A 532-amino-acid chain; its full sequence is Vesicular acetylcholine transporter unc-17 (532 aa).

Residues 1-31 lie on the Cytoplasmic side of the membrane; the sequence is MGFNVPVINRDSEILKADAKKWLEQQDNQKK. Residues 32-52 traverse the membrane as a helical segment; that stretch reads CVLVIVSIALLLDNMLYMVIV. Residues 53 to 101 are Lumenal, vesicle-facing; sequence PIIPKYLRDIHNYQVTFEGYHNETSQLANGTYLVREVGGRINFLDEELE. Residues N74 and N81 are each glycosylated (N-linked (GlcNAc...) asparagine). The chain crosses the membrane as a helical span at residues 102-121; sequence LGWLFASKALLQIFVNPFSG. Residues 122-130 lie on the Cytoplasmic side of the membrane; the sequence is YIIDRVGYE. A helical transmembrane segment spans residues 131-151; it reads IPMILGLCTMFFSTAIFALGK. Over 152–160 the chain is Lumenal, vesicle; the sequence is SYGVLLFAR. Residues 161 to 180 form a helical membrane-spanning segment; sequence SLQGFGSAFADTSGLAMIAD. At 181 to 191 the chain is on the cytoplasmic side; the sequence is RFTEENERSAA. Residues 192-213 traverse the membrane as a helical segment; sequence LGIALAFISFGCLVAPPFGSVL. Over 214 to 219 the chain is Lumenal, vesicle; the sequence is YSLAGK. A helical membrane pass occupies residues 220 to 242; it reads PVPFLILSFVCLADAIAVFMVIN. At 243 to 266 the chain is on the cytoplasmic side; it reads PHRRGTDSHGEKVQGTPMWRLFMD. The chain crosses the membrane as a helical span at residues 267 to 286; that stretch reads PFIACCSGALIMANVSLAFL. The Lumenal, vesicle portion of the chain corresponds to 287–303; it reads EPTITTWMSEMMPDTPG. A helical membrane pass occupies residues 304–328; sequence WLVGVIWLPPFFPHVLGVYVTVKML. Residues 329 to 335 lie on the Cytoplasmic side of the membrane; the sequence is RAFPHHT. Residues 336-356 form a helical membrane-spanning segment; that stretch reads WAIAMVGLAMEGIACFAIPYT. The Lumenal, vesicle segment spans residues 357–367; sequence TSVMQLVIPLS. The helical transmembrane segment at 368–388 threads the bilayer; sequence FVCFGIALIDTSLLPMLGHLV. The Cytoplasmic portion of the chain corresponds to 389 to 393; that stretch reads DTRHV. A helical transmembrane segment spans residues 394–412; sequence SVYGSVYAIADISYSLAYA. Over 413-418 the chain is Lumenal, vesicle; sequence FGPIIA. A helical membrane pass occupies residues 419-440; it reads GWIVTNWGFTALNIIIFATNVT. The Cytoplasmic segment spans residues 441-532; sequence YAPVLFLLRK…AGYDPLNPQW (92 aa).

Belongs to the major facilitator superfamily. Vesicular transporter family. As to expression, detected in most regions of the nervous system including the nerve ring, the ventral and dorsal nerve cords, and the pharyngeal nervous system. Expressed in most cholinergic neurons. In addition, expressed in SIA, SIB and SMB sublateral motor neurons.

The protein localises to the cytoplasmic vesicle. It is found in the secretory vesicle. The protein resides in the synaptic vesicle membrane. Functionally, involved in acetylcholine transport into synaptic vesicles. This chain is Vesicular acetylcholine transporter unc-17, found in Caenorhabditis elegans.